Consider the following 181-residue polypeptide: Ras-like protein 1 (181 aa).

10–17 serves as a coordination point for GTP; sequence GAGGVGKS. The short motif at 32–40 is the Effector region element; sequence YDPTIEDSY. Residues 57–61 and 116–119 each bind GTP; these read DTAGQ and NKCD. Cys-178 is modified (cysteine methyl ester). The S-geranylgeranyl cysteine moiety is linked to residue Cys-178. The propeptide at 179–181 is removed in mature form; that stretch reads KML.

This sequence belongs to the small GTPase superfamily. Ras family.

It localises to the cell membrane. The catalysed reaction is GTP + H2O = GDP + phosphate + H(+). Its activity is regulated as follows. Alternates between an inactive form bound to GDP and an active form bound to GTP. Activated by a guanine nucleotide-exchange factor (GEF) and inactivated by a GTPase-activating protein (GAP). Ras proteins bind GDP/GTP and possess intrinsic GTPase activity. Plays a role in eye development by regulating cell growth, survival of postmitotic ommatidial cells and differentiation of photoreceptor cells. During larval development, mediates Ptth/tor signaling leading to the production of ecdysone, a hormone required for the initiation of metamorphosis. This chain is Ras-like protein 1, found in Drosophila mojavensis (Fruit fly).